A 150-amino-acid polypeptide reads, in one-letter code: Large ribosomal subunit protein bL9 (150 aa).

Belongs to the bacterial ribosomal protein bL9 family.

Binds to the 23S rRNA. This is Large ribosomal subunit protein bL9 from Corynebacterium kroppenstedtii (strain DSM 44385 / JCM 11950 / CIP 105744 / CCUG 35717).